The primary structure comprises 510 residues: 2,3-bisphosphoglycerate-independent phosphoglycerate mutase (510 aa).

The Mn(2+) site is built by Asp-12 and Ser-62. Ser-62 acts as the Phosphoserine intermediate in catalysis. Residues His-123, 153 to 154 (RD), Arg-185, Arg-191, 260 to 263 (RPDR), and Lys-333 contribute to the substrate site. Mn(2+) contacts are provided by Asp-400, His-404, Asp-441, His-442, and His-460.

It belongs to the BPG-independent phosphoglycerate mutase family. In terms of assembly, monomer. Requires Mn(2+) as cofactor.

It catalyses the reaction (2R)-2-phosphoglycerate = (2R)-3-phosphoglycerate. Its pathway is carbohydrate degradation; glycolysis; pyruvate from D-glyceraldehyde 3-phosphate: step 3/5. In terms of biological role, catalyzes the interconversion of 2-phosphoglycerate and 3-phosphoglycerate. The polypeptide is 2,3-bisphosphoglycerate-independent phosphoglycerate mutase (Clostridium acetobutylicum (strain ATCC 824 / DSM 792 / JCM 1419 / IAM 19013 / LMG 5710 / NBRC 13948 / NRRL B-527 / VKM B-1787 / 2291 / W)).